A 601-amino-acid chain; its full sequence is Probable translation initiation factor IF-2 (601 aa).

Residues 10-227 (LRAPIVVVLG…VLAGLAQRYL (218 aa)) form the tr-type G domain. Residues 19–26 (GHVDAGKT) form a G1 region. Position 19-26 (19-26 (GHVDAGKT)) interacts with GTP. The segment at 44–48 (TMTQH) is G2. The segment at 83–86 (DTPG) is G3. Residues 83–87 (DTPGH) and 137–140 (NKID) contribute to the GTP site. Positions 137–140 (NKID) are G4. The interval 205 to 207 (SAV) is G5.

It belongs to the TRAFAC class translation factor GTPase superfamily. Classic translation factor GTPase family. IF-2 subfamily.

Function in general translation initiation by promoting the binding of the formylmethionine-tRNA to ribosomes. Seems to function along with eIF-2. In Thermofilum pendens (strain DSM 2475 / Hrk 5), this protein is Probable translation initiation factor IF-2.